The chain runs to 642 residues: Zinc finger protein 14 (642 aa).

The KRAB domain maps to 4–76; sequence VSFEDVAVNF…MVERLCESRK (73 aa). The C2H2-type 1 zinc-finger motif lies at 103–125; sequence HECSFCGRDFMHHSSLNRHMRSH. The C2H2-type 2; degenerate zinc-finger motif lies at 141–163; it reads RKHKAVEKTFSYHHCFRKHERTH. The C2H2-type 3 zinc finger occupies 169-191; sequence YECKQCGKAFIYYQPFQRHERTH. The C2H2-type 4; atypical zinc finger occupies 197-217; it reads YECKQCGKTFIYYQSFQQHAH. 15 C2H2-type zinc fingers span residues 223–245, 251–273, 279–301, 307–329, 335–357, 363–385, 391–413, 419–441, 447–469, 475–497, 503–525, 531–553, 559–581, 587–609, and 615–637; these read YECK…ERTH, YKCK…KRTH, YECK…VITH, YKCK…ERTH, YECK…ETTH, YECK…ERSH, YECK…EKIH, FECK…ERTH, YQCK…ERTH, and YRCK…ERSH.

It belongs to the krueppel C2H2-type zinc-finger protein family.

Its subcellular location is the nucleus. May be involved in transcriptional regulation. The protein is Zinc finger protein 14 (ZNF14) of Pongo abelii (Sumatran orangutan).